The chain runs to 593 residues: Transcription factor ATEG_07667 (593 aa).

Positions 18–47 (CTQCYKAKCRCVRTPSGDTCERCIRLKKRC) form a DNA-binding region, zn(2)-C6 fungal-type.

The protein resides in the nucleus. Its function is as follows. Transcriptional regulator that regulates both the azasperpyranone A biosynthesis clusters A and B. Specifically up-regulates the expression of the cluster A and B specific transcription factors ATEG_03638 and ATEG_07666, which in turn activate the expression of their respective clusters. The protein is Transcription factor ATEG_07667 of Aspergillus terreus (strain NIH 2624 / FGSC A1156).